The primary structure comprises 157 residues: Small ribosomal subunit protein uS7 (157 aa).

It belongs to the universal ribosomal protein uS7 family. Part of the 30S ribosomal subunit. Contacts proteins S9 and S11.

Its function is as follows. One of the primary rRNA binding proteins, it binds directly to 16S rRNA where it nucleates assembly of the head domain of the 30S subunit. Is located at the subunit interface close to the decoding center, probably blocks exit of the E-site tRNA. The polypeptide is Small ribosomal subunit protein uS7 (Roseiflexus sp. (strain RS-1)).